Reading from the N-terminus, the 309-residue chain is Large ribosomal subunit protein mL45 (309 aa).

The protein belongs to the mitochondrion-specific ribosomal protein mL45 family. As to quaternary structure, component of the mitochondrial ribosome large subunit (39S) which comprises a 16S rRNA and about 50 distinct proteins.

The protein localises to the mitochondrion. In terms of biological role, component of the mitochondrial large ribosomal subunit (mt-LSU). Within the mitochondrial ribosomes, required to direct the nascent polypeptide toward the tunnel exit and position the exit at a distance from the membrane surface. This Xenopus laevis (African clawed frog) protein is Large ribosomal subunit protein mL45 (mrpl45).